A 458-amino-acid polypeptide reads, in one-letter code: Dihydrolipoyllysine-residue acetyltransferase component of pyruvate dehydrogenase complex, mitochondrial (458 aa).

A mitochondrion-targeting transit peptide spans 1–28; that stretch reads MIVPVLSRQALRHASVARVALPSLTRWY. A Lipoyl-binding domain is found at 34 to 110; sequence HTVVKMPALS…AVGNPIAILV (77 aa). An N6-lipoyllysine modification is found at K75. Residues 126–164 are disordered; that stretch reads DAGGETSPAVPKDEPKNESTASAPTPAPTPAPEPENTSF. Residues 177-214 enclose the Peripheral subunit-binding (PSBD) domain; it reads NALPAAKRLAREKGIDLRNVKGSGPGGKITEEDVKKAL. Catalysis depends on residues H431 and D435.

The protein belongs to the 2-oxoacid dehydrogenase family. Requires (R)-lipoate as cofactor.

Its subcellular location is the mitochondrion matrix. The catalysed reaction is N(6)-[(R)-dihydrolipoyl]-L-lysyl-[protein] + acetyl-CoA = N(6)-[(R)-S(8)-acetyldihydrolipoyl]-L-lysyl-[protein] + CoA. Its function is as follows. The pyruvate dehydrogenase complex catalyzes the overall conversion of pyruvate to acetyl-CoA and CO(2). It contains multiple copies of three enzymatic components: pyruvate dehydrogenase (E1), dihydrolipoamide acetyltransferase (E2) and lipoamide dehydrogenase (E3). The sequence is that of Dihydrolipoyllysine-residue acetyltransferase component of pyruvate dehydrogenase complex, mitochondrial (mrp-3) from Neurospora crassa (strain ATCC 24698 / 74-OR23-1A / CBS 708.71 / DSM 1257 / FGSC 987).